A 361-amino-acid polypeptide reads, in one-letter code: DNA replication and repair protein RecF (361 aa).

Position 30–37 (30–37 (GPNGSGKT)) interacts with ATP.

It belongs to the RecF family.

It is found in the cytoplasm. The RecF protein is involved in DNA metabolism; it is required for DNA replication and normal SOS inducibility. RecF binds preferentially to single-stranded, linear DNA. It also seems to bind ATP. This chain is DNA replication and repair protein RecF, found in Yersinia pseudotuberculosis serotype O:1b (strain IP 31758).